A 196-amino-acid chain; its full sequence is Pyridoxine/pyridoxamine 5'-phosphate oxidase (196 aa).

FMN-binding positions include R44–K49, Y59–T60, R65, K66, and Q88. K49 is a binding site for substrate. Substrate contacts are provided by Y106, R110, and S114. FMN contacts are provided by residues Q123–S124 and W169. R175–H177 lines the substrate pocket. R179 is a binding site for FMN.

This sequence belongs to the pyridoxamine 5'-phosphate oxidase family. As to quaternary structure, homodimer. FMN serves as cofactor.

The enzyme catalyses pyridoxamine 5'-phosphate + O2 + H2O = pyridoxal 5'-phosphate + H2O2 + NH4(+). It carries out the reaction pyridoxine 5'-phosphate + O2 = pyridoxal 5'-phosphate + H2O2. Its pathway is cofactor metabolism; pyridoxal 5'-phosphate salvage; pyridoxal 5'-phosphate from pyridoxamine 5'-phosphate: step 1/1. It functions in the pathway cofactor metabolism; pyridoxal 5'-phosphate salvage; pyridoxal 5'-phosphate from pyridoxine 5'-phosphate: step 1/1. In terms of biological role, catalyzes the oxidation of either pyridoxine 5'-phosphate (PNP) or pyridoxamine 5'-phosphate (PMP) into pyridoxal 5'-phosphate (PLP). The polypeptide is Pyridoxine/pyridoxamine 5'-phosphate oxidase (Alkalilimnicola ehrlichii (strain ATCC BAA-1101 / DSM 17681 / MLHE-1)).